The chain runs to 599 residues: Sulfite reductase [NADPH] flavoprotein alpha-component (599 aa).

Residues isoleucine 63 to valine 201 form the Flavodoxin-like domain. Residues serine 69 to alanine 74, serine 116 to glycine 119, and leucine 152 to cysteine 161 contribute to the FMN site. Residues glutamate 234–proline 448 enclose the FAD-binding FR-type domain. FAD contacts are provided by residues threonine 322, histidine 356, arginine 386–serine 389, threonine 404–glycine 406, tyrosine 410, and glycine 419–serine 422. NADP(+)-binding positions include serine 519 to arginine 520, lysine 525 to glutamine 529, and aspartate 561. Residue tyrosine 599 participates in FAD binding.

This sequence belongs to the NADPH-dependent sulphite reductase flavoprotein subunit CysJ family. In the N-terminal section; belongs to the flavodoxin family. The protein in the C-terminal section; belongs to the flavoprotein pyridine nucleotide cytochrome reductase family. As to quaternary structure, alpha(8)-beta(8). The alpha component is a flavoprotein, the beta component is a hemoprotein. It depends on FAD as a cofactor. Requires FMN as cofactor.

The catalysed reaction is hydrogen sulfide + 3 NADP(+) + 3 H2O = sulfite + 3 NADPH + 4 H(+). Its pathway is sulfur metabolism; hydrogen sulfide biosynthesis; hydrogen sulfide from sulfite (NADPH route): step 1/1. Functionally, component of the sulfite reductase complex that catalyzes the 6-electron reduction of sulfite to sulfide. This is one of several activities required for the biosynthesis of L-cysteine from sulfate. The flavoprotein component catalyzes the electron flow from NADPH -&gt; FAD -&gt; FMN to the hemoprotein component. The polypeptide is Sulfite reductase [NADPH] flavoprotein alpha-component (Serratia proteamaculans (strain 568)).